A 250-amino-acid chain; its full sequence is Iron-sulfur assembly protein 1 (250 aa).

The disordered stretch occupies residues 54-89 (AADSVSPDSQRPGKKPFKFIVSNQSKSSKASKSPKW). Residues 75-89 (SNQSKSSKASKSPKW) show a composition bias toward low complexity. Residues cysteine 178, cysteine 242, and cysteine 244 each coordinate Fe cation.

Belongs to the HesB/IscA family.

The protein localises to the mitochondrion matrix. Its function is as follows. Involved in the assembly of mitochondrial and cytoplasmic iron-sulfur proteins. Probably involved in the binding of an intermediate of Fe/S cluster assembly. The chain is Iron-sulfur assembly protein 1 (ISA1) from Saccharomyces cerevisiae (strain ATCC 204508 / S288c) (Baker's yeast).